Reading from the N-terminus, the 1178-residue chain is Phosphate system positive regulatory protein PHO81 (1178 aa).

The 169-residue stretch at 1-169 folds into the SPX domain; it reads MKFGKYLEAR…QSHDKDFYLA (169 aa). The disordered stretch occupies residues 210–250; the sequence is QSSTFTNDDDDDNNTSNNNKHNNNNNNNNNNNNNNNNNNIL. Over residues 223 to 250 the composition is skewed to low complexity; sequence NTSNNNKHNNNNNNNNNNNNNNNNNNIL. 6 ANK repeats span residues 423–452, 458–487, 506–535, 556–586, 591–620, and 624–653; these read HSRV…LEDV, DSKT…ANAS, VQFD…KQNA, TGLC…DPNE, NKWT…RLDI, and NGHS…NLPS. A GP-PDE domain is found at 871–1178; that stretch reads IINYEPYWKS…ELLFENNIDM (308 aa). Phosphoserine is present on Ser-956.

Associates specifically with the PHO80-PHO85 and PCL7-PHO85 cyclin-CDK complexes, and much of this interaction is mediated through the PHO80 and PCL7 cyclin subunits. Interacts with the transcription factor PHO4. Post-translationally, phosphorylated by the cyclin-CDK PHO80-PHO85. Phosphorylation mediates the formation of a stable interaction with the cyclin-CDK and is required for function as an active inhibitor of the complex under phosphate starvation conditions.

The protein localises to the cytoplasm. The protein resides in the nucleus. In terms of biological role, inhibits the kinase activity of the cyclin-CDKs PHO80-PHO85 and PCL7-PHO85 under low-phosphate conditions. This is Phosphate system positive regulatory protein PHO81 (PHO81) from Saccharomyces cerevisiae (strain ATCC 204508 / S288c) (Baker's yeast).